A 123-amino-acid polypeptide reads, in one-letter code: MATINQLVRQPRKRSVEKSDVPALQNCPQRRGVCTRVYTTTPKKPNSALRKVCRVRLTNGFEVSSYIGGEGHNLQEHSVVLIRGGRVKDLPGVRYHTVRGSLDTSGVKGRNQGRSKYGTKRPK.

Residues 1–22 form a disordered region; the sequence is MATINQLVRQPRKRSVEKSDVP. Position 89 is a 3-methylthioaspartic acid (aspartate 89). The segment at 100–123 is disordered; it reads GSLDTSGVKGRNQGRSKYGTKRPK. The span at 111–123 shows a compositional bias: basic residues; the sequence is NQGRSKYGTKRPK.

This sequence belongs to the universal ribosomal protein uS12 family. Part of the 30S ribosomal subunit. Contacts proteins S8 and S17. May interact with IF1 in the 30S initiation complex.

With S4 and S5 plays an important role in translational accuracy. Its function is as follows. Interacts with and stabilizes bases of the 16S rRNA that are involved in tRNA selection in the A site and with the mRNA backbone. Located at the interface of the 30S and 50S subunits, it traverses the body of the 30S subunit contacting proteins on the other side and probably holding the rRNA structure together. The combined cluster of proteins S8, S12 and S17 appears to hold together the shoulder and platform of the 30S subunit. The protein is Small ribosomal subunit protein uS12 of Pseudomonas entomophila (strain L48).